The following is a 1201-amino-acid chain: Protein dduB (1201 aa).

The first 22 residues, 1-22 (MKFIKYLLILFLILKINYFVES), serve as a signal peptide directing secretion. Topologically, residues 23–1180 (GVDCQKNTEY…QDPSDELSTS (1158 aa)) are extracellular. Residues N68, N122, N150, N185, N283, N348, N360, N437, N448, N518, N535, N554, N585, N631, N759, N815, N830, N844, N946, N1042, N1058, N1098, and N1108 are each glycosylated (N-linked (GlcNAc...) asparagine). The chain crosses the membrane as a helical span at residues 1181-1201 (SFIQLNILSLLLISIFTIFIL).

Its subcellular location is the membrane. This chain is Protein dduB (dduB), found in Dictyostelium discoideum (Social amoeba).